A 156-amino-acid polypeptide reads, in one-letter code: tRNA (cytidine(34)-2'-O)-methyltransferase (156 aa).

S-adenosyl-L-methionine is bound by residues glycine 102, leucine 124, and serine 132.

It belongs to the class IV-like SAM-binding methyltransferase superfamily. RNA methyltransferase TrmH family. TrmL subfamily. In terms of assembly, homodimer.

The protein localises to the cytoplasm. It catalyses the reaction cytidine(34) in tRNA + S-adenosyl-L-methionine = 2'-O-methylcytidine(34) in tRNA + S-adenosyl-L-homocysteine + H(+). It carries out the reaction 5-carboxymethylaminomethyluridine(34) in tRNA(Leu) + S-adenosyl-L-methionine = 5-carboxymethylaminomethyl-2'-O-methyluridine(34) in tRNA(Leu) + S-adenosyl-L-homocysteine + H(+). In terms of biological role, methylates the ribose at the nucleotide 34 wobble position in the two leucyl isoacceptors tRNA(Leu)(CmAA) and tRNA(Leu)(cmnm5UmAA). Catalyzes the methyl transfer from S-adenosyl-L-methionine to the 2'-OH of the wobble nucleotide. This is tRNA (cytidine(34)-2'-O)-methyltransferase from Burkholderia ambifaria (strain ATCC BAA-244 / DSM 16087 / CCUG 44356 / LMG 19182 / AMMD) (Burkholderia cepacia (strain AMMD)).